A 248-amino-acid chain; its full sequence is Segregation and condensation protein A (248 aa).

It belongs to the ScpA family. In terms of assembly, component of a cohesin-like complex composed of ScpA, ScpB and the Smc homodimer, in which ScpA and ScpB bind to the head domain of Smc. The presence of the three proteins is required for the association of the complex with DNA.

It is found in the cytoplasm. Its function is as follows. Participates in chromosomal partition during cell division. May act via the formation of a condensin-like complex containing Smc and ScpB that pull DNA away from mid-cell into both cell halves. This is Segregation and condensation protein A from Clostridium perfringens (strain ATCC 13124 / DSM 756 / JCM 1290 / NCIMB 6125 / NCTC 8237 / Type A).